A 243-amino-acid chain; its full sequence is 1-(5-phosphoribosyl)-5-[(5-phosphoribosylamino)methylideneamino] imidazole-4-carboxamide isomerase (243 aa).

D8 functions as the Proton acceptor in the catalytic mechanism. D130 acts as the Proton donor in catalysis.

The protein belongs to the HisA/HisF family.

Its subcellular location is the cytoplasm. It catalyses the reaction 1-(5-phospho-beta-D-ribosyl)-5-[(5-phospho-beta-D-ribosylamino)methylideneamino]imidazole-4-carboxamide = 5-[(5-phospho-1-deoxy-D-ribulos-1-ylimino)methylamino]-1-(5-phospho-beta-D-ribosyl)imidazole-4-carboxamide. It functions in the pathway amino-acid biosynthesis; L-histidine biosynthesis; L-histidine from 5-phospho-alpha-D-ribose 1-diphosphate: step 4/9. The chain is 1-(5-phosphoribosyl)-5-[(5-phosphoribosylamino)methylideneamino] imidazole-4-carboxamide isomerase from Vesicomyosocius okutanii subsp. Calyptogena okutanii (strain HA).